A 332-amino-acid chain; its full sequence is Aspartate carbamoyltransferase catalytic subunit (332 aa).

2 residues coordinate carbamoyl phosphate: R54 and T55. K82 lines the L-aspartate pocket. Carbamoyl phosphate contacts are provided by R104, H134, and Q137. 2 residues coordinate L-aspartate: R175 and R230. Residues G271 and P272 each contribute to the carbamoyl phosphate site. The segment at 312-332 (GGPDGDSTTSPGSGPEGGTTP) is disordered.

It belongs to the aspartate/ornithine carbamoyltransferase superfamily. ATCase family. Heterododecamer (2C3:3R2) of six catalytic PyrB chains organized as two trimers (C3), and six regulatory PyrI chains organized as three dimers (R2).

It catalyses the reaction carbamoyl phosphate + L-aspartate = N-carbamoyl-L-aspartate + phosphate + H(+). Its pathway is pyrimidine metabolism; UMP biosynthesis via de novo pathway; (S)-dihydroorotate from bicarbonate: step 2/3. Functionally, catalyzes the condensation of carbamoyl phosphate and aspartate to form carbamoyl aspartate and inorganic phosphate, the committed step in the de novo pyrimidine nucleotide biosynthesis pathway. The chain is Aspartate carbamoyltransferase catalytic subunit from Beutenbergia cavernae (strain ATCC BAA-8 / DSM 12333 / CCUG 43141 / JCM 11478 / NBRC 16432 / NCIMB 13614 / HKI 0122).